The following is a 102-amino-acid chain: Large ribosomal subunit protein bL21 (102 aa).

The protein belongs to the bacterial ribosomal protein bL21 family. Part of the 50S ribosomal subunit. Contacts protein L20.

Functionally, this protein binds to 23S rRNA in the presence of protein L20. The chain is Large ribosomal subunit protein bL21 from Phytoplasma mali (strain AT).